The chain runs to 798 residues: Protocadherin beta-14 (798 aa).

The signal sequence occupies residues 1–26; that stretch reads MEIRGALDLRKRQVLIFLVLLGLSRA. Over 27–686 the chain is Extracellular; sequence GTESAHYSVA…APAQAQADSL (660 aa). Cadherin domains lie at 35-133, 138-242, 247-347, 352-451, and 456-561; these read VAEE…SPTF, ILIK…APEF, YEVQ…PPEV, ITKR…APAF, and YTLF…SPFV. Residues Cys-96 and Cys-102 are joined by a disulfide bond. Asn-169 carries N-linked (GlcNAc...) asparagine glycosylation. 3 N-linked (GlcNAc...) asparagine glycosylation sites follow: Asn-359, Asn-418, and Asn-436. N-linked (GlcNAc...) asparagine glycosylation occurs at Asn-567. In terms of domain architecture, Cadherin 6 spans 568–671; the sequence is GSAPCTELVP…LVDGFSQPYL (104 aa). Residues 687–711 traverse the membrane as a helical segment; sequence TVYLVVALASVSSLFLFSVLLFVAV. At 712 to 798 the chain is on the cytoplasmic side; the sequence is RLCRRSRAAS…FRNSFGLNIQ (87 aa).

Its subcellular location is the cell membrane. Functionally, potential calcium-dependent cell-adhesion protein. May be involved in the establishment and maintenance of specific neuronal connections in the brain. This Pan troglodytes (Chimpanzee) protein is Protocadherin beta-14 (PCDHB14).